The chain runs to 429 residues: MSTTTTASIEGYKLGKVIIEGKTKQVYDLPEQPGLCLLLSKDRITAGDGVKAHDLAGKAEISNTTNGQVFRLLNEAGIRTAYVKQCGAKAFIARKCQMIPIEWVTRRLATGSFLKRNVGVPEGYRFSPPKQETFFKDDANHDPQWSEEQIVSAKFELNGLVIGQDEVDIMRRTTLLVFEILERAWQTKNCALIDMKVEFGICDDGNIVLADIIDSDSWRLWPAGDKRLMVDKQVYRNLASVTASDLDTVKRNFIWVAEQLADIVPKKDHLVVILMGSASDISHSEKIATSCRSLGLNVELRVSSAHKGPEETLRIVREYESVMSNLIFVAVAGRSNGLGPVVSGSTNYPVINCPPVKSDNMQVDVWSSLNLPSGLGCATVLYPEAAALHAATILGLGNFMVWSKLRVKALNNFITLKKADKELRGVRNA.

Residues 7-264 (ASIEGYKLGK…WVAEQLADIV (258 aa)) are SAICAR synthetase. Positions 7–264 (ASIEGYKLGK…WVAEQLADIV (258 aa)) are SAICAR synthetase domain. The interval 265–429 (PKKDHLVVIL…DKELRGVRNA (165 aa)) is AIR carboxylase. An AIR carboxylase domain region spans residues 270 to 429 (LVVILMGSAS…DKELRGVRNA (160 aa)). Ser335 contacts CO2.

It in the N-terminal section; belongs to the SAICAR synthetase family. The protein in the C-terminal section; belongs to the AIR carboxylase family. Class II subfamily. As to quaternary structure, homooctamer.

It catalyses the reaction 5-amino-1-(5-phospho-D-ribosyl)imidazole-4-carboxylate + L-aspartate + ATP = (2S)-2-[5-amino-1-(5-phospho-beta-D-ribosyl)imidazole-4-carboxamido]succinate + ADP + phosphate + 2 H(+). The enzyme catalyses 5-amino-1-(5-phospho-D-ribosyl)imidazole-4-carboxylate + H(+) = 5-amino-1-(5-phospho-beta-D-ribosyl)imidazole + CO2. It functions in the pathway purine metabolism; IMP biosynthesis via de novo pathway; 5-amino-1-(5-phospho-D-ribosyl)imidazole-4-carboxamide from 5-amino-1-(5-phospho-D-ribosyl)imidazole-4-carboxylate: step 1/2. Its pathway is purine metabolism; IMP biosynthesis via de novo pathway; 5-amino-1-(5-phospho-D-ribosyl)imidazole-4-carboxylate from 5-amino-1-(5-phospho-D-ribosyl)imidazole (carboxylase route): step 1/1. Its function is as follows. Bifunctional phosphoribosylaminoimidazole carboxylase and phosphoribosylaminoimidazole succinocarboxamide synthetase catalyzing two reactions of the de novo purine biosynthetic pathway. In Drosophila melanogaster (Fruit fly), this protein is Bifunctional phosphoribosylaminoimidazole carboxylase/phosphoribosylaminoimidazole succinocarboxamide synthetase.